Here is a 413-residue protein sequence, read N- to C-terminus: Probable cysteine desulfurase (413 aa).

Lys-229 carries the post-translational modification N6-(pyridoxal phosphate)lysine. Cys-368 functions as the Cysteine persulfide intermediate in the catalytic mechanism.

The protein belongs to the class-V pyridoxal-phosphate-dependent aminotransferase family. Csd subfamily. It depends on pyridoxal 5'-phosphate as a cofactor.

It carries out the reaction (sulfur carrier)-H + L-cysteine = (sulfur carrier)-SH + L-alanine. Functionally, catalyzes the removal of elemental sulfur and selenium atoms from L-cysteine, L-cystine, L-selenocysteine, and L-selenocystine to produce L-alanine. This Staphylococcus epidermidis (strain ATCC 12228 / FDA PCI 1200) protein is Probable cysteine desulfurase (csd).